The primary structure comprises 223 residues: Deoxyribose-phosphate aldolase (223 aa).

Asp-89 (proton donor/acceptor) is an active-site residue. Lys-152 functions as the Schiff-base intermediate with acetaldehyde in the catalytic mechanism. The active-site Proton donor/acceptor is the Lys-181.

The protein belongs to the DeoC/FbaB aldolase family. DeoC type 1 subfamily.

The protein localises to the cytoplasm. The enzyme catalyses 2-deoxy-D-ribose 5-phosphate = D-glyceraldehyde 3-phosphate + acetaldehyde. Its pathway is carbohydrate degradation; 2-deoxy-D-ribose 1-phosphate degradation; D-glyceraldehyde 3-phosphate and acetaldehyde from 2-deoxy-alpha-D-ribose 1-phosphate: step 2/2. Functionally, catalyzes a reversible aldol reaction between acetaldehyde and D-glyceraldehyde 3-phosphate to generate 2-deoxy-D-ribose 5-phosphate. This Bacillus cereus (strain G9842) protein is Deoxyribose-phosphate aldolase.